The primary structure comprises 483 residues: Glutamyl-tRNA(Gln) amidotransferase subunit A (483 aa).

Active-site charge relay system residues include lysine 75 and serine 150. The Acyl-ester intermediate role is filled by serine 174.

This sequence belongs to the amidase family. GatA subfamily. As to quaternary structure, heterotrimer of A, B and C subunits.

The catalysed reaction is L-glutamyl-tRNA(Gln) + L-glutamine + ATP + H2O = L-glutaminyl-tRNA(Gln) + L-glutamate + ADP + phosphate + H(+). In terms of biological role, allows the formation of correctly charged Gln-tRNA(Gln) through the transamidation of misacylated Glu-tRNA(Gln) in organisms which lack glutaminyl-tRNA synthetase. The reaction takes place in the presence of glutamine and ATP through an activated gamma-phospho-Glu-tRNA(Gln). The polypeptide is Glutamyl-tRNA(Gln) amidotransferase subunit A (Legionella pneumophila (strain Corby)).